The following is a 139-amino-acid chain: Small ribosomal subunit protein bS6 (139 aa).

The segment at 120 to 139 (KGASKVETPTGPESTDIQEK) is disordered. The segment covering 130–139 (GPESTDIQEK) has biased composition (polar residues).

The protein belongs to the bacterial ribosomal protein bS6 family.

Functionally, binds together with bS18 to 16S ribosomal RNA. The protein is Small ribosomal subunit protein bS6 (rpsF) of Borreliella burgdorferi (strain ATCC 35210 / DSM 4680 / CIP 102532 / B31) (Borrelia burgdorferi).